Here is a 693-residue protein sequence, read N- to C-terminus: Serine/threonine-protein kinase Pkn1 (693 aa).

Residues 59-328 (FRLVRRLGRG…QVALAEHVRV (270 aa)) form the Protein kinase domain. Residues 65 to 73 (LGRGGMGAV) and K88 contribute to the ATP site. The active-site Proton acceptor is D180. The 99-residue stretch at 393-491 (LVEVPVQVVL…LKAAVDALLQ (99 aa)) folds into the PilZ domain. A TPR repeat occupies 630–663 (ARSHFQSGGALERDGQLSQALDQYERGLKLAPLE).

Belongs to the protein kinase superfamily. Ser/Thr protein kinase family. In terms of processing, autophosphorylated.

The catalysed reaction is L-seryl-[protein] + ATP = O-phospho-L-seryl-[protein] + ADP + H(+). The enzyme catalyses L-threonyl-[protein] + ATP = O-phospho-L-threonyl-[protein] + ADP + H(+). Its activity is regulated as follows. May be regulated by calcium or a calmodulin-like protein. Its function is as follows. Plays an essential role in proper timing of early development events. In Myxococcus xanthus, this protein is Serine/threonine-protein kinase Pkn1 (pkn1).